A 364-amino-acid polypeptide reads, in one-letter code: Probable dual-specificity RNA methyltransferase RlmN (364 aa).

Catalysis depends on E107, which acts as the Proton acceptor. Positions H113–D346 constitute a Radical SAM core domain. The cysteines at positions 120 and 351 are disulfide-linked. 3 residues coordinate [4Fe-4S] cluster: C127, C131, and C134. S-adenosyl-L-methionine-binding positions include G177–E178, S209, S232–H234, and N308. C351 functions as the S-methylcysteine intermediate in the catalytic mechanism.

It belongs to the radical SAM superfamily. RlmN family. Requires [4Fe-4S] cluster as cofactor.

It is found in the cytoplasm. It catalyses the reaction adenosine(2503) in 23S rRNA + 2 reduced [2Fe-2S]-[ferredoxin] + 2 S-adenosyl-L-methionine = 2-methyladenosine(2503) in 23S rRNA + 5'-deoxyadenosine + L-methionine + 2 oxidized [2Fe-2S]-[ferredoxin] + S-adenosyl-L-homocysteine. It carries out the reaction adenosine(37) in tRNA + 2 reduced [2Fe-2S]-[ferredoxin] + 2 S-adenosyl-L-methionine = 2-methyladenosine(37) in tRNA + 5'-deoxyadenosine + L-methionine + 2 oxidized [2Fe-2S]-[ferredoxin] + S-adenosyl-L-homocysteine. Functionally, specifically methylates position 2 of adenine 2503 in 23S rRNA and position 2 of adenine 37 in tRNAs. In Geobacillus thermodenitrificans (strain NG80-2), this protein is Probable dual-specificity RNA methyltransferase RlmN.